We begin with the raw amino-acid sequence, 169 residues long: Crossover junction endodeoxyribonuclease RuvC (169 aa).

Residues Asp-11, Glu-71, and Asp-143 contribute to the active site. Residues Asp-11, Glu-71, and Asp-143 each contribute to the Mg(2+) site.

The protein belongs to the RuvC family. In terms of assembly, homodimer which binds Holliday junction (HJ) DNA. The HJ becomes 2-fold symmetrical on binding to RuvC with unstacked arms; it has a different conformation from HJ DNA in complex with RuvA. In the full resolvosome a probable DNA-RuvA(4)-RuvB(12)-RuvC(2) complex forms which resolves the HJ. Requires Mg(2+) as cofactor.

The protein resides in the cytoplasm. The catalysed reaction is Endonucleolytic cleavage at a junction such as a reciprocal single-stranded crossover between two homologous DNA duplexes (Holliday junction).. The RuvA-RuvB-RuvC complex processes Holliday junction (HJ) DNA during genetic recombination and DNA repair. Endonuclease that resolves HJ intermediates. Cleaves cruciform DNA by making single-stranded nicks across the HJ at symmetrical positions within the homologous arms, yielding a 5'-phosphate and a 3'-hydroxyl group; requires a central core of homology in the junction. The consensus cleavage sequence is 5'-(A/T)TT(C/G)-3'. Cleavage occurs on the 3'-side of the TT dinucleotide at the point of strand exchange. HJ branch migration catalyzed by RuvA-RuvB allows RuvC to scan DNA until it finds its consensus sequence, where it cleaves and resolves the cruciform DNA. The sequence is that of Crossover junction endodeoxyribonuclease RuvC from Rhizobium johnstonii (strain DSM 114642 / LMG 32736 / 3841) (Rhizobium leguminosarum bv. viciae).